We begin with the raw amino-acid sequence, 240 residues long: Uridylate kinase (240 aa).

Lysine 14–glycine 17 serves as a coordination point for ATP. A UMP-binding site is contributed by glycine 56. Glycine 57 and arginine 61 together coordinate ATP. UMP-binding positions include aspartate 76 and threonine 137 to threonine 144. The ATP site is built by threonine 164, tyrosine 170, and aspartate 173.

Belongs to the UMP kinase family. As to quaternary structure, homohexamer.

It localises to the cytoplasm. The enzyme catalyses UMP + ATP = UDP + ADP. The protein operates within pyrimidine metabolism; CTP biosynthesis via de novo pathway; UDP from UMP (UMPK route): step 1/1. With respect to regulation, inhibited by UTP. Catalyzes the reversible phosphorylation of UMP to UDP. This chain is Uridylate kinase, found in Verminephrobacter eiseniae (strain EF01-2).